Reading from the N-terminus, the 545-residue chain is Methionine--tRNA ligase (545 aa).

The short motif at 10-20 (PYANGSLHIGH) is the 'HIGH' region element. 4 residues coordinate Zn(2+): Cys141, Cys144, Cys153, and Cys156. The 'KMSKS' region motif lies at 329-333 (KISTS). Thr332 contacts ATP.

It belongs to the class-I aminoacyl-tRNA synthetase family. MetG type 1 subfamily. In terms of assembly, monomer. Zn(2+) is required as a cofactor.

The protein resides in the cytoplasm. The enzyme catalyses tRNA(Met) + L-methionine + ATP = L-methionyl-tRNA(Met) + AMP + diphosphate. Its function is as follows. Is required not only for elongation of protein synthesis but also for the initiation of all mRNA translation through initiator tRNA(fMet) aminoacylation. In Streptococcus pneumoniae (strain 70585), this protein is Methionine--tRNA ligase.